We begin with the raw amino-acid sequence, 155 residues long: Interleukin-2 (155 aa).

An N-terminal signal peptide occupies residues 1 to 20 (MYKMQLVACIALSLVLITNS). An O-linked (GalNAc...) threonine glycan is attached at Thr-23. Cys-77 and Cys-125 form a disulfide bridge.

The protein belongs to the IL-2 family.

It localises to the secreted. In terms of biological role, cytokine produced by activated CD4-positive helper T-cells and to a lesser extend activated CD8-positive T-cells and natural killer (NK) cells that plays pivotal roles in the immune response and tolerance. Binds to a receptor complex composed of either the high-affinity trimeric IL-2R (IL2RA/CD25, IL2RB/CD122 and IL2RG/CD132) or the low-affinity dimeric IL-2R (IL2RB and IL2RG). Interaction with the receptor leads to oligomerization and conformation changes in the IL-2R subunits resulting in downstream signaling starting with phosphorylation of JAK1 and JAK3. In turn, JAK1 and JAK3 phosphorylate the receptor to form a docking site leading to the phosphorylation of several substrates including STAT5. This process leads to activation of several pathways including STAT, phosphoinositide-3-kinase/PI3K and mitogen-activated protein kinase/MAPK pathways. Functions as a T-cell growth factor and can increase NK-cell cytolytic activity as well. Promotes strong proliferation of activated B-cells and subsequently immunoglobulin production. Plays a pivotal role in regulating the adaptive immune system by controlling the survival and proliferation of regulatory T-cells, which are required for the maintenance of immune tolerance. Moreover, participates in the differentiation and homeostasis of effector T-cell subsets, including Th1, Th2, Th17 as well as memory CD8-positive T-cells. The protein is Interleukin-2 (IL2) of Dasypus novemcinctus (Nine-banded armadillo).